A 350-amino-acid polypeptide reads, in one-letter code: fMet-Leu-Phe receptor (350 aa).

The Extracellular segment spans residues 1–27 (METNSSLPTNISGGTPAVSAGYLFLDI). Asn-4 and Asn-10 each carry an N-linked (GlcNAc...) asparagine glycan. The chain crosses the membrane as a helical span at residues 28 to 50 (ITYLVFAVTFVLGVLGNGLVIWV). Residues 51–61 (AGFRMTHTVTT) lie on the Cytoplasmic side of the membrane. Residues 62 to 83 (ISYLNLAVADFCFTSTLPFFMV) form a helical membrane-spanning segment. The Extracellular portion of the chain corresponds to 84 to 100 (RKAMGGHWPFGWFLCKF). The cysteines at positions 98 and 176 are disulfide-linked. Residues 101 to 121 (VFTIVDINLFGSVFLIALIAL) form a helical membrane-spanning segment. At 122–140 (DRCVCVLHPVWTQNHRTVS) the chain is on the cytoplasmic side. A helical transmembrane segment spans residues 141-162 (LAKKVIIGPWVMALLLTLPVII). Residues 163-205 (RVTTVPGKTGTVACTFNFSPWTNDPKERINVAVAMLTVRGIIR) lie on the Extracellular side of the membrane. A helical membrane pass occupies residues 206-226 (FIIGFSAPMSIVAVSYGLIAT). Over 227–242 (KIHKQGLIKSSRPLRV) the chain is Cytoplasmic. The chain crosses the membrane as a helical span at residues 243–266 (LSFVAAAFFLCWSPYQVVALIATV). The Extracellular segment spans residues 267-285 (RIRELLQGMYKEIGIAVDV). Residues 286 to 305 (TSALAFFNSCLNPMLYVFMG) traverse the membrane as a helical segment. Residues 306 to 350 (QDFRERLIHALPASLERALTEDSTQTSDTATNSTLPSAEVELQAK) lie on the Cytoplasmic side of the membrane. The interval 325–350 (TEDSTQTSDTATNSTLPSAEVELQAK) is disordered. Residues 326-341 (EDSTQTSDTATNSTLP) show a composition bias toward polar residues. Residue Ser-328 is modified to Phosphoserine. Phosphothreonine is present on residues Thr-329 and Thr-331. Residue Ser-332 is modified to Phosphoserine. 2 positions are modified to phosphothreonine: Thr-334 and Thr-336. Phosphoserine is present on Ser-338. Thr-339 carries the phosphothreonine modification.

It belongs to the G-protein coupled receptor 1 family. Interacts with S.aureus chemotaxis inhibitory protein (CHIPS); the interaction blocks the receptor and may thus inhibit the immune response. Phosphorylated; which is necessary for desensitization. Neutrophils.

It localises to the cell membrane. High affinity receptor for N-formyl-methionyl peptides (fMLP), which are powerful neutrophil chemotactic factors. Binding of fMLP to the receptor stimulates intracellular calcium mobilization and superoxide anion release. This response is mediated via a G-protein that activates a phosphatidylinositol-calcium second messenger system. Receptor for TAFA4, mediates its effects on chemoattracting macrophages, promoting phagocytosis and increasing ROS release. Receptor for cathepsin CTSG, leading to increased phagocyte chemotaxis. The protein is fMet-Leu-Phe receptor (FPR1) of Homo sapiens (Human).